The chain runs to 301 residues: Probable alpha-L-glutamate ligase (301 aa).

The ATP-grasp domain occupies 104–287 (LQLLSRKGVG…IAGMVIDFIE (184 aa)). ATP is bound by residues K141, 178 to 179 (EY), D187, and 211 to 213 (RSN). Mg(2+)-binding residues include D248, E260, and N262. Residues D248, E260, and N262 each contribute to the Mn(2+) site.

This sequence belongs to the RimK family. It depends on Mg(2+) as a cofactor. Mn(2+) serves as cofactor.

The protein is Probable alpha-L-glutamate ligase of Pseudoalteromonas translucida (strain TAC 125).